Reading from the N-terminus, the 430-residue chain is Enolase (430 aa).

(2R)-2-phosphoglycerate is bound at residue Gln162. Glu204 (proton donor) is an active-site residue. 3 residues coordinate Mg(2+): Asp241, Glu283, and Asp310. Positions 335, 364, 365, and 386 each coordinate (2R)-2-phosphoglycerate. Catalysis depends on Lys335, which acts as the Proton acceptor.

Belongs to the enolase family. The cofactor is Mg(2+).

The protein resides in the cytoplasm. It localises to the secreted. The protein localises to the cell surface. The enzyme catalyses (2R)-2-phosphoglycerate = phosphoenolpyruvate + H2O. The protein operates within carbohydrate degradation; glycolysis; pyruvate from D-glyceraldehyde 3-phosphate: step 4/5. Catalyzes the reversible conversion of 2-phosphoglycerate (2-PG) into phosphoenolpyruvate (PEP). It is essential for the degradation of carbohydrates via glycolysis. The sequence is that of Enolase from Mycobacteroides abscessus (strain ATCC 19977 / DSM 44196 / CCUG 20993 / CIP 104536 / JCM 13569 / NCTC 13031 / TMC 1543 / L948) (Mycobacterium abscessus).